The primary structure comprises 691 residues: Elongation factor G (691 aa).

The 275-residue stretch at 8–282 folds into the tr-type G domain; the sequence is ERVRNIGIAA…AVVDYLPAPV (275 aa). GTP contacts are provided by residues 17–24, 81–85, and 135–138; these read AHIDAGKT, DTPGH, and NKMD.

The protein belongs to the TRAFAC class translation factor GTPase superfamily. Classic translation factor GTPase family. EF-G/EF-2 subfamily.

It is found in the cytoplasm. Functionally, catalyzes the GTP-dependent ribosomal translocation step during translation elongation. During this step, the ribosome changes from the pre-translocational (PRE) to the post-translocational (POST) state as the newly formed A-site-bound peptidyl-tRNA and P-site-bound deacylated tRNA move to the P and E sites, respectively. Catalyzes the coordinated movement of the two tRNA molecules, the mRNA and conformational changes in the ribosome. The polypeptide is Elongation factor G (Prochlorococcus marinus (strain MIT 9312)).